A 334-amino-acid polypeptide reads, in one-letter code: Formamidase (334 aa).

The region spanning 14–260 (FLVAAIQFPV…WEIVTGEIYP (247 aa)) is the CN hydrolase domain. The active-site Proton acceptor is Glu-60. Residue Lys-133 is the Proton donor of the active site. Catalysis depends on Cys-166, which acts as the Nucleophile.

The protein belongs to the carbon-nitrogen hydrolase superfamily. Aliphatic amidase family.

The enzyme catalyses formamide + H2O = formate + NH4(+). Is an aliphatic amidase with a restricted substrate specificity, as it only hydrolyzes formamide. The chain is Formamidase from Helicobacter pylori (strain P12).